Here is a 298-residue protein sequence, read N- to C-terminus: Enoyl-CoA hydratase ACTT6 (298 aa).

Belongs to the enoyl-CoA hydratase/isomerase family.

It participates in mycotoxin biosynthesis. In terms of biological role, enoyl-CoA hydratase; part of the gene clusters that mediate the biosynthesis of the host-selective toxins (HSTs) ACT-toxins responsible for brown spot of tangerine disease by the tangerine pathotype which affects tangerines and mandarins. ACT-toxins consist of three moieties, 9,10-epoxy-8-hydroxy-9-methyl-decatrienoic acid (EDA), valine and a polyketide. ACT-toxin I is toxic to both citrus and pear; toxin II the 5''-deoxy derivative of ACT-toxin I, is highly toxic to pear and slightly toxic to citrus. On cellular level, ACT-toxins affect plasma membrane of susceptible cells and cause a sudden increase in loss of K(+) after a few minutes of toxin treatment. The acyl-CoA ligase ACTT1, the hydrolase ACTT2, the enoyl-CoA hydratases ACTT3 and ACTT6, and the acyl-CoA synthetase ACTT5 are all involved in the biosynthesis of the AK-, AF- and ACT-toxin common 9,10-epoxy-8-hydroxy-9-methyl-decatrienoic acid (EDA) structural moiety. The exact role of each enzyme, and of additional enzymes identified within the AF-toxin clusters have still to be determined. On the other hand, ACTTS1 to ACTTS4 are specific to the tangerine pathotype. The function of ACTTS3 is to elongate the polyketide chain portion of ACT-toxin that is unique to this toxin. The enoyl-reductase ACTTS2 might complement the missing enoyl-reductase (ER) domain in ACTTS3 in the synthesis of the polyketide portion of ACT-toxin. The roles of the nonribosomal peptide synthetases-related proteins ACTTS1 and ACTTS4 have also still not been elucidated. In Alternaria alternata (Alternaria rot fungus), this protein is Enoyl-CoA hydratase ACTT6.